The following is a 609-amino-acid chain: Dihydroxy-acid dehydratase (609 aa).

Aspartate 81 is a binding site for Mg(2+). Cysteine 122 contributes to the [2Fe-2S] cluster binding site. Mg(2+) contacts are provided by aspartate 123 and lysine 124. N6-carboxylysine is present on lysine 124. Position 195 (cysteine 195) interacts with [2Fe-2S] cluster. Mg(2+) is bound at residue glutamate 491. The active-site Proton acceptor is serine 517.

It belongs to the IlvD/Edd family. Homodimer. The cofactor is [2Fe-2S] cluster. Requires Mg(2+) as cofactor.

It catalyses the reaction (2R)-2,3-dihydroxy-3-methylbutanoate = 3-methyl-2-oxobutanoate + H2O. The enzyme catalyses (2R,3R)-2,3-dihydroxy-3-methylpentanoate = (S)-3-methyl-2-oxopentanoate + H2O. It participates in amino-acid biosynthesis; L-isoleucine biosynthesis; L-isoleucine from 2-oxobutanoate: step 3/4. It functions in the pathway amino-acid biosynthesis; L-valine biosynthesis; L-valine from pyruvate: step 3/4. Its function is as follows. Functions in the biosynthesis of branched-chain amino acids. Catalyzes the dehydration of (2R,3R)-2,3-dihydroxy-3-methylpentanoate (2,3-dihydroxy-3-methylvalerate) into 2-oxo-3-methylpentanoate (2-oxo-3-methylvalerate) and of (2R)-2,3-dihydroxy-3-methylbutanoate (2,3-dihydroxyisovalerate) into 2-oxo-3-methylbutanoate (2-oxoisovalerate), the penultimate precursor to L-isoleucine and L-valine, respectively. The chain is Dihydroxy-acid dehydratase from Acinetobacter baumannii (strain ATCC 17978 / DSM 105126 / CIP 53.77 / LMG 1025 / NCDC KC755 / 5377).